Reading from the N-terminus, the 326-residue chain is MSQFVVCALYKFVSLPAFEALQQPLLKEMESLEIKGTLLLASEGINGTVAGSQAGIDSLLAWLDAQPGLDNIVYKLSFDDEMPFYRTKVKLKKEIVTMGVEGIDPRKVVGTYVKPKDWNKLISDPEVLLIDTRNDYEVNIGTFKNAVDPKTQTFREFPDYVKQNLDPKQHKKVAMFCTGGIRCEKSTAYLKEQGFDEVYHLEGGVLKYLEEVKPEESLWEGECFVFDNRVSVNHQLEKGQYDQCNACRLPITEEDKQSEHYVQGVSCPHCIDKLSDKQRKRFVERERQVQLAKSRGESHIGSDVKQVIEARRQDKVERKQRQHQEG.

Residues 123-217 form the Rhodanese domain; the sequence is SDPEVLLIDT…YLEEVKPEES (95 aa). C177 functions as the Cysteine persulfide intermediate in the catalytic mechanism. The segment at 293-326 is disordered; it reads KSRGESHIGSDVKQVIEARRQDKVERKQRQHQEG.

This sequence belongs to the TrhO family.

It carries out the reaction uridine(34) in tRNA + AH2 + O2 = 5-hydroxyuridine(34) in tRNA + A + H2O. In terms of biological role, catalyzes oxygen-dependent 5-hydroxyuridine (ho5U) modification at position 34 in tRNAs. The polypeptide is tRNA uridine(34) hydroxylase (Shewanella loihica (strain ATCC BAA-1088 / PV-4)).